The following is a 1757-amino-acid chain: 1-phosphatidylinositol-3-phosphate 5-kinase FAB1A (1757 aa).

Residues 36–102 (DQSCPVCYEC…VCNYCYKQWE (67 aa)) form an FYVE-type zinc finger. 8 residues coordinate Zn(2+): C42, C45, C58, C61, C66, C69, C94, and C97. 4 disordered regions span residues 125–193 (ARSV…SDNQ), 276–297 (KTRQQENGWNDVKEGSPPCEES), 313–346 (LPPEPENEEDEREAVLSDDDGDEGDRGDWGYLRP), and 684–709 (AEKSPTTELRGEPHKANGDLTGNFTS). Residues 134-145 (NSSNCTIDSTAG) are compositionally biased toward polar residues. Acidic residues predominate over residues 317–337 (PENEEDEREAVLSDDDGDEGD). The stretch at 1014–1087 (LQKESKEVIK…LQQMLNVVKD (74 aa)) forms a coiled coil. The PIPK domain occupies 1395–1719 (SFSLFDSVNL…RFRKAMTAYF (325 aa)). Residues 1729–1739 (AAVVPSNSSSA) are compositionally biased toward low complexity. The interval 1729–1757 (AAVVPSNSSSAEVKEEEEKDNPQAVGNKS) is disordered.

As to quaternary structure, component of the PI(3,5)P2 regulatory complex at least composed of ATG18, SAC/FIG4, FAB1 and VAC14. It depends on Mg(2+) as a cofactor. Requires Mn(2+) as cofactor. In terms of tissue distribution, ubiquitous with highest expression levels in pollen, seed, and senescent leaves.

It is found in the endosome membrane. It catalyses the reaction a 1,2-diacyl-sn-glycero-3-phospho-(1D-myo-inositol-3-phosphate) + ATP = a 1,2-diacyl-sn-glycero-3-phospho-(1D-myo-inositol-3,5-bisphosphate) + ADP + H(+). In terms of biological role, the PI(3,5)P2 regulatory complex regulates both the synthesis and turnover of phosphatidylinositol 3,5-bisphosphate (PtdIns(3,5)P2). Catalyzes the phosphorylation of phosphatidylinositol 3-phosphate on the fifth hydroxyl of the myo-inositol ring, to form phosphatidylinositol 3,5-bisphosphate. Plays an important role in maintenance of endomembrane homeostasis including endocytosis, vacuole formation, and vacuolar acidification processes. Required for development of viable pollen. Might mediate recycling of auxin transporters. The protein is 1-phosphatidylinositol-3-phosphate 5-kinase FAB1A (FAB1A) of Arabidopsis thaliana (Mouse-ear cress).